Consider the following 430-residue polypeptide: Gamma-glutamyl phosphate reductase (430 aa).

This sequence belongs to the gamma-glutamyl phosphate reductase family.

It localises to the cytoplasm. It catalyses the reaction L-glutamate 5-semialdehyde + phosphate + NADP(+) = L-glutamyl 5-phosphate + NADPH + H(+). It participates in amino-acid biosynthesis; L-proline biosynthesis; L-glutamate 5-semialdehyde from L-glutamate: step 2/2. Functionally, catalyzes the NADPH-dependent reduction of L-glutamate 5-phosphate into L-glutamate 5-semialdehyde and phosphate. The product spontaneously undergoes cyclization to form 1-pyrroline-5-carboxylate. The protein is Gamma-glutamyl phosphate reductase of Rhodopseudomonas palustris (strain BisB5).